The primary structure comprises 176 residues: NAD(P)H-quinone oxidoreductase subunit 6, chloroplastic (176 aa).

The next 5 helical transmembrane spans lie at 10–30 (FLLVFLGLGLILGGIGVVLLT), 32–52 (PIYSAFSLGLVLVCISLLYIL), 61–81 (AQLLIYVGAINVLIIFAVMFM), 92–112 (LWTVGNGFTLLICTSIFGLLI), and 152–172 (FFLPFEFISIILLAALIGAIT).

The protein belongs to the complex I subunit 6 family. In terms of assembly, NDH is composed of at least 16 different subunits, 5 of which are encoded in the nucleus.

Its subcellular location is the plastid. It localises to the chloroplast thylakoid membrane. It catalyses the reaction a plastoquinone + NADH + (n+1) H(+)(in) = a plastoquinol + NAD(+) + n H(+)(out). The catalysed reaction is a plastoquinone + NADPH + (n+1) H(+)(in) = a plastoquinol + NADP(+) + n H(+)(out). Its function is as follows. NDH shuttles electrons from NAD(P)H:plastoquinone, via FMN and iron-sulfur (Fe-S) centers, to quinones in the photosynthetic chain and possibly in a chloroplast respiratory chain. The immediate electron acceptor for the enzyme in this species is believed to be plastoquinone. Couples the redox reaction to proton translocation, and thus conserves the redox energy in a proton gradient. This chain is NAD(P)H-quinone oxidoreductase subunit 6, chloroplastic (ndhG), found in Morus indica (Mulberry).